A 1132-amino-acid chain; its full sequence is SNF2 domain-containing protein CLASSY 4 (1132 aa).

Disordered regions lie at residues 24–104 (NKSK…SKSF), 224–331 (LRGE…HHKK), 376–396 (DPVVRESSSEKVNEHGKPRER), and 525–544 (PSVNDNKKCSDRKGDPLPNR). Residues 47–54 (KRRVNMRD) carry the Nuclear localization signal motif. Positions 81-90 (EYPEGKRDDE) are enriched in basic and acidic residues. Positions 92 to 103 (VGSTSGNLQSKS) are enriched in polar residues. The segment covering 233–242 (SDEVVSLSSS) has biased composition (low complexity). Residues 243–254 (SDDEEDPLEELG) show a composition bias toward acidic residues. Basic and acidic residues predominate over residues 255–269 (TDSREEVSGEDRDSG). Acidic residues-rich tracts occupy residues 270 to 282 (ESDMDEDANDSDS) and 291 to 309 (DSSDVESSDSDFVCSEDEE). Composition is skewed to basic and acidic residues over residues 310-326 (GGTRDDATCEKNPSEKV), 376-392 (DPVVRESSSEKVNEHGK), and 525-539 (PSVNDNKKCSDRKGD). A Helicase ATP-binding domain is found at 603-796 (SVGVKGSGGC…SNVLCLARPA (194 aa)). Residue 616 to 623 (HKAGTGKT) coordinates ATP. The short motif at 747–750 (DEGH) is the DEAH box element. In terms of domain architecture, Helicase C-terminal spans 934–1087 (DFIRISGTVK…ELVFSSTNEK (154 aa)).

The protein belongs to the SNF2/RAD54 helicase family. In terms of assembly, interacts with NRPD1.

The protein resides in the nucleus. Functionally, probable chromatin remodeling factor. This Arabidopsis thaliana (Mouse-ear cress) protein is SNF2 domain-containing protein CLASSY 4 (CLSY4).